The following is a 210-amino-acid chain: MRPSNPRPPVTGPDSGPEAPFPIRLSGPVIKGFGRGSKELGIPTANIPVDGLEEVLPKELGVGVYYGVVALDPATAPAPSSSDSTSGDAAPILPAVLSIGYNPYYKNKTRSIEIHIMPSLTLPSPTAPSEEKEKVKFHKLPDFYGTKLNLLMLGYIRPEYDYVSMEALVEDIRIDCEVARASLLRPAYRVYLDGNEDETVSAQRDWLRSF.

Pro residues predominate over residues 1-11 (MRPSNPRPPVT). Residues 1-24 (MRPSNPRPPVTGPDSGPEAPFPIR) are disordered. Mg(2+) is bound by residues Thr-44 and Asn-46. The active-site Nucleophile is the Glu-113.

It belongs to the flavokinase family. It depends on Zn(2+) as a cofactor. Mg(2+) serves as cofactor.

The enzyme catalyses riboflavin + ATP = FMN + ADP + H(+). The protein operates within cofactor biosynthesis; FMN biosynthesis; FMN from riboflavin (ATP route): step 1/1. Its function is as follows. Catalyzes the phosphorylation of riboflavin (vitamin B2) to form flavin mononucleotide (FMN) coenzyme. This Emericella nidulans (strain FGSC A4 / ATCC 38163 / CBS 112.46 / NRRL 194 / M139) (Aspergillus nidulans) protein is Riboflavin kinase (fmn1).